The chain runs to 70 residues: Toxin Isom2 (70 aa).

The region spanning 2-65 is the LCN-type CS-alpha/beta domain; the sequence is KNGYAVDSSG…ISDTRKKYCD (64 aa). 4 disulfides stabilise this stretch: cysteine 16–cysteine 37, cysteine 22–cysteine 42, cysteine 26–cysteine 44, and cysteine 38–cysteine 64.

Expressed by the venom gland.

The protein resides in the secreted. Excitatory insect beta-toxins induce a spastic paralysis. They bind voltage-independently at site-4 of sodium channels (Nav) and shift the voltage of activation toward more negative potentials thereby affecting sodium channel activation and promoting spontaneous and repetitive firing. The protein is Toxin Isom2 of Isometrus vittatus (Bark scorpion).